The primary structure comprises 235 residues: Ribosomal RNA small subunit methyltransferase G (235 aa).

S-adenosyl-L-methionine contacts are provided by residues Gly74, Leu79, 124–125, and Arg142; that span reads AE. The segment at 211 to 235 is disordered; it reads RRRAAKPGRNKSGRTARSRGRTGRR. Basic residues predominate over residues 213–235; the sequence is RAAKPGRNKSGRTARSRGRTGRR.

It belongs to the methyltransferase superfamily. RNA methyltransferase RsmG family.

It localises to the cytoplasm. Specifically methylates the N7 position of guanine in position 518 of 16S rRNA. The protein is Ribosomal RNA small subunit methyltransferase G of Mycolicibacterium smegmatis (strain ATCC 700084 / mc(2)155) (Mycobacterium smegmatis).